The sequence spans 408 residues: MLSPTFILWDVGYPFYTYGSIIIIALIIWQVKKNHRGLKLGPNRNCCRRHQKVKQRAKEKTPRARRHSRKEADKPLELLSIMRSQGWLPQEGSVRRLLCADPCCQICNSVALEIQQLISGETTLTTPTSSGPSQGSSCLEVLSMSSLSFDQSQESLPFKQLSLPSATRTVSQLTNQKSVTQSAAKSATKPATKSVSAISIRQYWAGHQQLRQECRGPELPLDAGALSSSSVEEPRIPVNQHVKKKSNSEGILKKQEAVEADLGNKLKHFTQWINPDMKGQGRKECILRCKDEKVAKTKTKKAEKSPPSTKRPMKGAKLEKEEGFFDALQCLDSEFQRQSMESVRSSQSCFLPLSSGSSKRSPLLTCATQPENPSHVSVSTSAEGTCLPQESTQSRKKELRGSQTSASS.

The chain crosses the membrane as a helical span at residues 11–31; it reads VGYPFYTYGSIIIIALIIWQV. The disordered stretch occupies residues 51 to 71; it reads QKVKQRAKEKTPRARRHSRKE. Ser-152 carries the phosphoserine modification. Disordered regions lie at residues 297 to 316 and 351 to 408; these read TKTK…MKGA and LPLS…SASS. The span at 351–392 shows a compositional bias: polar residues; sequence LPLSSGSSKRSPLLTCATQPENPSHVSVSTSAEGTCLPQEST.

This sequence belongs to the SPATA31 family.

The protein localises to the membrane. The sequence is that of Protein SPATA31F3 (SPATA31F3) from Bos taurus (Bovine).